Reading from the N-terminus, the 89-residue chain is Sec translocon accessory complex subunit YrbF (89 aa).

The chain crosses the membrane as a helical span at residues 4–24 (GTLGTLVPIILMFAVLYFLLI).

The protein belongs to the YajC family. In terms of assembly, part of the SecDF-YidC-YajC translocase complex. The SecDF-YidC-YajC translocase forms a supercomplex with SecYEG, called the holo-translocon (HTL).

It localises to the cell membrane. The SecYEG-SecDF-YajC-YidC holo-translocon (HTL) protein secretase/insertase is a supercomplex required for protein secretion, insertion of proteins into membranes, and assembly of membrane protein complexes. While the SecYEG complex is essential for assembly of a number of proteins and complexes, the SecDF-YajC-YidC subcomplex facilitates these functions. In Bacillus subtilis (strain 168), this protein is Sec translocon accessory complex subunit YrbF (yrbF).